Consider the following 422-residue polypeptide: Beclin-1-like protein (422 aa).

A coiled-coil region spans residues 119-243 (MLEIMDRELR…KQQLDKLRDT (125 aa)). Residues 182–201 (QSLNDAIAEEEQEREELHEQ) are disordered.

This sequence belongs to the beclin family. In terms of assembly, interacts with Rab18, preferentially binding to the GTP-bound form.

Its function is as follows. Plays a central role in autophagy. This Drosophila melanogaster (Fruit fly) protein is Beclin-1-like protein.